The sequence spans 827 residues: Beta-galactosidase 2 (827 aa).

The signal sequence occupies residues 1–24 (MAASAVAVAFVVAVAAVLAAAASA). Catalysis depends on glutamate 182, which acts as the Proton donor. Asparagine 209 is a glycosylation site (N-linked (GlcNAc...) asparagine). Glutamate 251 functions as the Nucleophile in the catalytic mechanism. Asparagine 458 is a glycosylation site (N-linked (GlcNAc...) asparagine). Positions 741-827 (DYEKAKVHLQ…KRAVVEAICG (87 aa)) constitute an SUEL-type lectin domain.

Belongs to the glycosyl hydrolase 35 family.

It localises to the secreted. It is found in the extracellular space. The protein localises to the apoplast. The enzyme catalyses Hydrolysis of terminal non-reducing beta-D-galactose residues in beta-D-galactosides.. The chain is Beta-galactosidase 2 from Oryza sativa subsp. japonica (Rice).